The primary structure comprises 419 residues: Transcription termination factor Rho (419 aa).

In terms of domain architecture, Rho RNA-BD spans Asp-48 to Lys-123. RNA-binding regions lie at residues Gly-61–Arg-66, Asp-78–Tyr-80, and Glu-108–Tyr-110. ATP is bound by residues Gly-169 to Gly-174, Lys-181 to Met-186, and Arg-212. Residues Val-284–Gly-288 form an RNA-binding 2 region.

It belongs to the Rho family. As to quaternary structure, homohexamer. The homohexamer assembles into an open ring structure.

Its function is as follows. Facilitates transcription termination by a mechanism that involves Rho binding to the nascent RNA, activation of Rho's RNA-dependent ATPase activity, and release of the mRNA from the DNA template. The sequence is that of Transcription termination factor Rho from Buchnera aphidicola subsp. Baizongia pistaciae (strain Bp).